A 359-amino-acid chain; its full sequence is Popy class I histocompatibility antigen, alpha chain E (359 aa).

The signal sequence occupies residues 1–18 (GTLLLLLSEALALTETWA). The interval 19–108 (GSHSLKYFHT…LRGYYNQTEA (90 aa)) is alpha-1. Residues 19–302 (GSHSLKYFHT…EPASQTTIPI (284 aa)) lie on the Extracellular side of the membrane. Asparagine 104 carries an N-linked (GlcNAc...) asparagine glycan. Residues 109 to 200 (GSHTLQWMHG…EKGKETLLHL (92 aa)) form an alpha-2 region. Cystine bridges form between cysteine 119-cysteine 182 and cysteine 221-cysteine 277. The alpha-3 stretch occupies residues 201–292 (DPPKTHVTHH…GLPEPLTLRW (92 aa)). An Ig-like C1-type domain is found at 203 to 291 (PKTHVTHHRI…EGLPEPLTLR (89 aa)). Positions 293–302 (EPASQTTIPI) are connecting peptide. A helical transmembrane segment spans residues 303–326 (VGIFAGLVLLGAVVTGATVVAAVM). The Cytoplasmic portion of the chain corresponds to 327–359 (WRKKSSGGKGGSYSKAEWSDSAQGSESLTACKA). The segment at 330 to 359 (KSSGGKGGSYSKAEWSDSAQGSESLTACKA) is disordered. Residues 346 to 359 (DSAQGSESLTACKA) show a composition bias toward polar residues. At serine 351 the chain carries Phosphoserine.

It belongs to the MHC class I family. In terms of assembly, heterodimer of an alpha chain and a beta chain (beta-2-microglobulin).

The protein resides in the membrane. Involved in the presentation of foreign antigens to the immune system. This is Popy class I histocompatibility antigen, alpha chain E (Popy-E) from Pongo pygmaeus (Bornean orangutan).